The chain runs to 221 residues: Response regulator protein PmrA (221 aa).

Positions 2 to 116 (RILLAEDDLL…ELQARVRALT (115 aa)) constitute a Response regulatory domain. A 4-aspartylphosphate modification is found at D51. A DNA-binding region (ompR/PhoB-type) is located at residues 124-218 (LPQLVHGELR…VRGIGYGIDQ (95 aa)).

The protein localises to the cytoplasm. Functionally, member of the two-component regulatory system PmrA/PmrB that plays a role in the regulation of resistance towards polymyxin B and cationic antimicrobial peptides in response to limiting concentrations of Mg(2+). Functions as a transcriptional activator by direct binding to a cis-acting sequence upstream of the target gene promoters including lipase lipA and pmrH promoters. Also autoregulates its own pmrAB operon under Mg(2+)-limiting conditions. The polypeptide is Response regulator protein PmrA (pmrA) (Pseudomonas aeruginosa (strain ATCC 15692 / DSM 22644 / CIP 104116 / JCM 14847 / LMG 12228 / 1C / PRS 101 / PAO1)).